Reading from the N-terminus, the 130-residue chain is DNA-directed RNA polymerase subunit omega (130 aa).

The interval 108 to 130 is disordered; the sequence is TEEELLKGLEGLAPPEEQPEEDE.

This sequence belongs to the RNA polymerase subunit omega family. As to quaternary structure, the RNAP catalytic core consists of 2 alpha, 1 beta, 1 beta' and 1 omega subunit. When a sigma factor is associated with the core the holoenzyme is formed, which can initiate transcription.

The catalysed reaction is RNA(n) + a ribonucleoside 5'-triphosphate = RNA(n+1) + diphosphate. Functionally, promotes RNA polymerase assembly. Latches the N- and C-terminal regions of the beta' subunit thereby facilitating its interaction with the beta and alpha subunits. In Rhodopseudomonas palustris (strain ATCC BAA-98 / CGA009), this protein is DNA-directed RNA polymerase subunit omega.